A 427-amino-acid polypeptide reads, in one-letter code: MTVPSAEELDSFKYSDLQNLAKRLGLRANMKADKLLKALKAHLNPETRKENKNQDENQFSTDETEIHVSSEEQAETESGGHVTKTRRRRRKKHKTIHGIPTSQTLLQDHLEMKGTDSSNFQNQENQENQDPRDTAEVPSLPEQRPEDGNAASSGEGEVNDIKDSKKPLEKRSLCTDEFSKLGNNKRTSATTPNFKKLHEARFKKMESIDEYIMRKKKHLKEHSSLNELKLDKKGIVTPVPPRGRLSVPCTPARQQCPQGHSATKMNVRFSAATKDNEHKCSLTKTPARKSPHVTAPGSASKGQAVFRTPKSKATERTSIAVITPFKLMTEATQTPSSSKKPVFDLKASLSRPLNYKPHKGKLKPWGQAKENNSLNERVSRVTFHRKTYKQPHLQTREERWKRQEQERKEKKEKLLEARRNLGVTKAQ.

The interval 41–190 is disordered; the sequence is AHLNPETRKE…LGNNKRTSAT (150 aa). Over residues 43 to 55 the composition is skewed to basic and acidic residues; sequence LNPETRKENKNQD. Positions 83–96 are enriched in basic residues; that stretch reads TKTRRRRRKKHKTI. The span at 119 to 128 shows a compositional bias: low complexity; the sequence is NFQNQENQEN. Ser-139 carries the post-translational modification Phosphoserine. Residues 159–179 show a composition bias toward basic and acidic residues; sequence NDIKDSKKPLEKRSLCTDEFS. Residues 181-190 show a composition bias toward polar residues; sequence LGNNKRTSAT. A Phosphothreonine modification is found at Thr-191. Residues 235 to 312 form a disordered region; that stretch reads IVTPVPPRGR…QAVFRTPKSK (78 aa). Residues 243–367 form an interaction with microtubules region; the sequence is GRLSVPCTPA…HKGKLKPWGQ (125 aa). At Ser-246 the chain carries Phosphoserine. Thr-250 is subject to Phosphothreonine. Residues 252–264 are compositionally biased toward polar residues; sequence ARQQCPQGHSATK. A Phosphoserine modification is found at Ser-261. Phosphothreonine is present on residues Thr-323 and Thr-334. Ser-337 and Ser-348 each carry phosphoserine. Residues 354-427 are disordered; it reads NYKPHKGKLK…RRNLGVTKAQ (74 aa). The short motif at 369 to 375 is the KEN box element; sequence KENNSLN. Positions 393–425 form a coiled coil; that stretch reads LQTREERWKRQEQERKEKKEKLLEARRNLGVTK. Positions 394 to 419 are enriched in basic and acidic residues; the sequence is QTREERWKRQEQERKEKKEKLLEARR.

Belongs to the NUSAP family. Interacts with DNA and microtubules. Microtubule bundling is inhibited by IPO7, KPNA2 and KPNB1 while association with DNA is also inhibited by IPO7 and KPNA2. Post-translationally, ubiquitinated. Ubiquitination by FZR1 may lead to proteasome-dependent degradation of this protein.

The protein localises to the cytoplasm. Its subcellular location is the nucleus. It is found in the nucleolus. It localises to the cytoskeleton. The protein resides in the spindle. The protein localises to the chromosome. Its function is as follows. Microtubule-associated protein with the capacity to bundle and stabilize microtubules. May associate with chromosomes and promote the organization of mitotic spindle microtubules around them. The sequence is that of Nucleolar and spindle-associated protein 1 (Nusap1) from Mus musculus (Mouse).